The primary structure comprises 333 residues: Serine proteinase inhibitor 2 (333 aa).

This sequence belongs to the serpin family. Poxviruses subfamily.

It is found in the host cytoplasm. Functionally, weak inhibitor of the interleukin-1-beta converting enzyme (ICE) and of granzyme B. Does not form a stable complex with ICE, but can for a stable complex with granzyme B. In Myxoma virus (strain Uriarra) (MYXV), this protein is Serine proteinase inhibitor 2 (SERP2).